The following is a 345-amino-acid chain: N-acetyl-gamma-glutamyl-phosphate reductase (345 aa).

C149 is a catalytic residue.

It belongs to the NAGSA dehydrogenase family. Type 1 subfamily.

It localises to the cytoplasm. It catalyses the reaction N-acetyl-L-glutamate 5-semialdehyde + phosphate + NADP(+) = N-acetyl-L-glutamyl 5-phosphate + NADPH + H(+). It functions in the pathway amino-acid biosynthesis; L-arginine biosynthesis; N(2)-acetyl-L-ornithine from L-glutamate: step 3/4. Its function is as follows. Catalyzes the NADPH-dependent reduction of N-acetyl-5-glutamyl phosphate to yield N-acetyl-L-glutamate 5-semialdehyde. This Bacillus cereus (strain ATCC 10987 / NRS 248) protein is N-acetyl-gamma-glutamyl-phosphate reductase.